Reading from the N-terminus, the 344-residue chain is Phosphoribosylformylglycinamidine cyclo-ligase (344 aa).

It belongs to the AIR synthase family.

It is found in the cytoplasm. The enzyme catalyses 2-formamido-N(1)-(5-O-phospho-beta-D-ribosyl)acetamidine + ATP = 5-amino-1-(5-phospho-beta-D-ribosyl)imidazole + ADP + phosphate + H(+). The protein operates within purine metabolism; IMP biosynthesis via de novo pathway; 5-amino-1-(5-phospho-D-ribosyl)imidazole from N(2)-formyl-N(1)-(5-phospho-D-ribosyl)glycinamide: step 2/2. The sequence is that of Phosphoribosylformylglycinamidine cyclo-ligase from Laribacter hongkongensis (strain HLHK9).